A 415-amino-acid polypeptide reads, in one-letter code: Acetyl-CoA acetyltransferase 1 (415 aa).

Residue cysteine 99 is the Acyl-thioester intermediate of the active site. A CoA-binding site is contributed by lysine 239. Alanine 256 serves as a coordination point for K(+). Residue serine 260 participates in CoA binding. A K(+)-binding site is contributed by valine 357. Residues histidine 361 and cysteine 391 each act as proton acceptor in the active site.

Belongs to the thiolase-like superfamily. Thiolase family. Expressed in the vascular system of roots, cotyledons, young leaves, fully expanded leaves, stems, flowers, and funiculi of siliques.

The protein localises to the cytoplasm. It is found in the peroxisome. It carries out the reaction 2 acetyl-CoA = acetoacetyl-CoA + CoA. Its pathway is metabolic intermediate biosynthesis; (R)-mevalonate biosynthesis; (R)-mevalonate from acetyl-CoA: step 1/3. In terms of biological role, catalyzes the condensation of two molecules of acetyl-CoA to produce acetoacetyl-CoA. This is Acetyl-CoA acetyltransferase 1 from Arabidopsis thaliana (Mouse-ear cress).